The chain runs to 211 residues: Methylthioribulose-1-phosphate dehydratase (211 aa).

Zn(2+)-binding residues include histidine 97 and histidine 99.

Belongs to the aldolase class II family. MtnB subfamily. In terms of assembly, homotetramer. Requires Zn(2+) as cofactor.

The catalysed reaction is 5-(methylsulfanyl)-D-ribulose 1-phosphate = 5-methylsulfanyl-2,3-dioxopentyl phosphate + H2O. Its pathway is amino-acid biosynthesis; L-methionine biosynthesis via salvage pathway; L-methionine from S-methyl-5-thio-alpha-D-ribose 1-phosphate: step 2/6. Catalyzes the dehydration of methylthioribulose-1-phosphate (MTRu-1-P) into 2,3-diketo-5-methylthiopentyl-1-phosphate (DK-MTP-1-P). This is Methylthioribulose-1-phosphate dehydratase from Geobacillus thermodenitrificans (strain NG80-2).